The primary structure comprises 49 residues: Light-harvesting protein B-880 alpha chain (49 aa).

Topologically, residues 1-12 (MYKLWLLFDPRR) are cytoplasmic. The chain crosses the membrane as a helical span at residues 13-33 (TLVALSAFLFVLGLIIHFISL). An a bacteriochlorophyll-binding site is contributed by histidine 29. Residues 34–49 (STDRFNWLEGKPAVRA) lie on the Periplasmic side of the membrane.

It belongs to the antenna complex alpha subunit family. As to quaternary structure, the core complex is formed by different alpha and beta chains, binding bacteriochlorophyll molecules, and arranged most probably in tetrameric structures disposed around the reaction center. The non-pigmented gamma chains may constitute additional components.

It localises to the cell inner membrane. Antenna complexes are light-harvesting systems, which transfer the excitation energy to the reaction centers. This Rhodoblastus acidophilus (Rhodopseudomonas acidophila) protein is Light-harvesting protein B-880 alpha chain.